The primary structure comprises 270 residues: UPF0354 protein BcerKBAB4_4524 (270 aa).

This sequence belongs to the UPF0354 family.

In Bacillus mycoides (strain KBAB4) (Bacillus weihenstephanensis), this protein is UPF0354 protein BcerKBAB4_4524.